Reading from the N-terminus, the 311-residue chain is Homoserine O-acetyltransferase (311 aa).

The Acyl-thioester intermediate role is filled by Cys142. Substrate is bound by residues Lys163 and Ser192. His235 (proton acceptor) is an active-site residue. The active site involves Glu237. Arg249 is a binding site for substrate.

Belongs to the MetA family.

It localises to the cytoplasm. The enzyme catalyses L-homoserine + acetyl-CoA = O-acetyl-L-homoserine + CoA. It functions in the pathway amino-acid biosynthesis; L-methionine biosynthesis via de novo pathway; O-acetyl-L-homoserine from L-homoserine: step 1/1. Functionally, transfers an acetyl group from acetyl-CoA to L-homoserine, forming acetyl-L-homoserine. In Lysinibacillus sphaericus (strain C3-41), this protein is Homoserine O-acetyltransferase.